The primary structure comprises 138 residues: Putative pre-16S rRNA nuclease (138 aa).

Belongs to the YqgF nuclease family.

The protein localises to the cytoplasm. Functionally, could be a nuclease involved in processing of the 5'-end of pre-16S rRNA. The sequence is that of Putative pre-16S rRNA nuclease from Escherichia coli O7:K1 (strain IAI39 / ExPEC).